The primary structure comprises 128 residues: UPF0292 protein MJ1624 (128 aa).

Residues 23-105 (EKPIIVEGKR…KVNTKIRHEI (83 aa)) enclose the Toprim domain. Mg(2+) is bound by residues E29, D74, and D76.

It belongs to the UPF0292 family. It depends on Mg(2+) as a cofactor.

The protein is UPF0292 protein MJ1624 of Methanocaldococcus jannaschii (strain ATCC 43067 / DSM 2661 / JAL-1 / JCM 10045 / NBRC 100440) (Methanococcus jannaschii).